Reading from the N-terminus, the 400-residue chain is Keratin, type I cytoskeletal 19 (400 aa).

The head stretch occupies residues 1 to 79 (MTSYSYRQSS…TASDGLLAGN (79 aa)). Arg-7 is modified (omega-N-methylarginine). Residues Ser-14 and Ser-22 each carry the phosphoserine modification. Arg-24 bears the Asymmetric dimethylarginine; alternate mark. Arg-24 bears the Omega-N-methylarginine; alternate mark. The residue at position 32 (Arg-32) is an Omega-N-methylarginine. Phosphoserine is present on residues Ser-35 and Ser-40. Residues Arg-43 and Arg-51 each carry the omega-N-methylarginine modification. A phosphoserine mark is found at Ser-57 and Ser-72. The coil 1A stretch occupies residues 80–115 (EKLTMQNLNDRLASYLDKVRALEAANGELEVKIRDW). Residues 80 to 391 (EKLTMQNLND…SLLEGQEDHY (312 aa)) form the IF rod domain. Positions 116-133 (YQKQGPGPSRDYSHYYTT) are linker 1. Positions 134 to 225 (IQDLRDKILG…KNHEEEISTL (92 aa)) are coil 1B. The segment at 226-248 (RGQVGGQVSVEVDSAPGTDLAKI) is linker 12. Residues 244–390 (DLAKILSDMR…RSLLEGQEDH (147 aa)) form a necessary for interaction with PNN region. The coil 2 stretch occupies residues 249–387 (LSDMRSQYEV…ATYRSLLEGQ (139 aa)). Phosphothreonine is present on Thr-323. The segment at 388–400 (EDHYNNLSASKVL) is rod-like helical tail. Tyr-391 is modified (phosphotyrosine). Phosphoserine occurs at positions 395 and 397.

This sequence belongs to the intermediate filament family. Heterotetramer of two type I and two type II keratins. Interacts with PNN and the actin-binding domain of DMD. Interacts with HCV core protein. As to quaternary structure, (Microbial infection) Interacts with hepatitis C virus/HCV core protein. In terms of tissue distribution, expressed in a defined zone of basal keratinocytes in the deep outer root sheath of hair follicles. Also observed in sweat gland and mammary gland ductal and secretory cells, bile ducts, gastrointestinal tract, bladder urothelium, oral epithelia, esophagus, ectocervical epithelium (at protein level). Expressed in epidermal basal cells, in nipple epidermis and a defined region of the hair follicle. Also seen in a subset of vascular wall cells in both the veins and artery of human umbilical cord, and in umbilical cord vascular smooth muscle. Observed in muscle fibers accumulating in the costameres of myoplasm at the sarcolemma in structures that contain dystrophin and spectrin.

In terms of biological role, involved in the organization of myofibers. Together with KRT8, helps to link the contractile apparatus to dystrophin at the costameres of striated muscle. The polypeptide is Keratin, type I cytoskeletal 19 (KRT19) (Homo sapiens (Human)).